Consider the following 229-residue polypeptide: 7-cyano-7-deazaguanine synthase (229 aa).

12-22 (LSGGMDSCVCA) is a binding site for ATP. The Zn(2+) site is built by C194, C202, C205, and C208.

The protein belongs to the QueC family. The cofactor is Zn(2+).

The enzyme catalyses 7-carboxy-7-deazaguanine + NH4(+) + ATP = 7-cyano-7-deazaguanine + ADP + phosphate + H2O + H(+). Its pathway is purine metabolism; 7-cyano-7-deazaguanine biosynthesis. Functionally, catalyzes the ATP-dependent conversion of 7-carboxy-7-deazaguanine (CDG) to 7-cyano-7-deazaguanine (preQ(0)). This is 7-cyano-7-deazaguanine synthase from Acidobacterium capsulatum (strain ATCC 51196 / DSM 11244 / BCRC 80197 / JCM 7670 / NBRC 15755 / NCIMB 13165 / 161).